Here is a 304-residue protein sequence, read N- to C-terminus: Acetyl-coenzyme A carboxylase carboxyl transferase subunit beta (304 aa).

Residues L29–P298 form the CoA carboxyltransferase N-terminal domain. The Zn(2+) site is built by C33, C36, C52, and C55. The C4-type zinc finger occupies C33–C55.

This sequence belongs to the AccD/PCCB family. As to quaternary structure, acetyl-CoA carboxylase is a heterohexamer composed of biotin carboxyl carrier protein (AccB), biotin carboxylase (AccC) and two subunits each of ACCase subunit alpha (AccA) and ACCase subunit beta (AccD). Zn(2+) is required as a cofactor.

The protein localises to the cytoplasm. It catalyses the reaction N(6)-carboxybiotinyl-L-lysyl-[protein] + acetyl-CoA = N(6)-biotinyl-L-lysyl-[protein] + malonyl-CoA. It functions in the pathway lipid metabolism; malonyl-CoA biosynthesis; malonyl-CoA from acetyl-CoA: step 1/1. Component of the acetyl coenzyme A carboxylase (ACC) complex. Biotin carboxylase (BC) catalyzes the carboxylation of biotin on its carrier protein (BCCP) and then the CO(2) group is transferred by the transcarboxylase to acetyl-CoA to form malonyl-CoA. This is Acetyl-coenzyme A carboxylase carboxyl transferase subunit beta from Acaryochloris marina (strain MBIC 11017).